We begin with the raw amino-acid sequence, 90 residues long: Small ribosomal subunit protein uS15c (90 aa).

Belongs to the universal ribosomal protein uS15 family. As to quaternary structure, part of the 30S ribosomal subunit.

Its subcellular location is the plastid. It localises to the chloroplast. In Pelargonium hortorum (Common geranium), this protein is Small ribosomal subunit protein uS15c (rps15-A).